We begin with the raw amino-acid sequence, 967 residues long: Translation initiation factor IF-2 (967 aa).

Disordered regions lie at residues 201 to 320 (KPIV…PGFV) and 349 to 382 (LQGK…ELEA). Polar residues predominate over residues 233–248 (TGPTFSGQTIDLSQFN). Residues 256–272 (PNKGGAKPAGAGNNNNN) show a composition bias toward low complexity. The segment covering 354-363 (NKSKAAKYRR) has biased composition (basic residues). Residues 364 to 382 (DKRDTHRQKSDDEQRELEA) are compositionally biased toward basic and acidic residues. In terms of domain architecture, tr-type G spans 465 to 635 (HRAPIVTVMG…LLEAEVLDLK (171 aa)). The interval 474 to 481 (GHVDHGKT) is G1. 474–481 (GHVDHGKT) is a GTP binding site. Residues 499 to 503 (GITQH) are G2. The segment at 521-524 (DTPG) is G3. GTP is bound by residues 521 to 525 (DTPGH) and 575 to 578 (NKVD). The segment at 575–578 (NKVD) is G4. The G5 stretch occupies residues 611–613 (SAK).

The protein belongs to the TRAFAC class translation factor GTPase superfamily. Classic translation factor GTPase family. IF-2 subfamily.

It is found in the cytoplasm. Its function is as follows. One of the essential components for the initiation of protein synthesis. Protects formylmethionyl-tRNA from spontaneous hydrolysis and promotes its binding to the 30S ribosomal subunits. Also involved in the hydrolysis of GTP during the formation of the 70S ribosomal complex. The chain is Translation initiation factor IF-2 from Flavobacterium psychrophilum (strain ATCC 49511 / DSM 21280 / CIP 103535 / JIP02/86).